The sequence spans 355 residues: D-alanine--D-alanine ligase (355 aa).

Residues 143 to 350 (KKIFSHLEIP…IDQLVAKLVD (208 aa)) enclose the ATP-grasp domain. Position 178–233 (178–233 (IEKLKLPVFVKPANSGSSLGISKAKTRSEIIKALQKAWEIDSRIVIEEGLDVRELE)) interacts with ATP. The Mg(2+) site is built by Asp-303, Glu-317, and Asn-319.

Belongs to the D-alanine--D-alanine ligase family. Mg(2+) serves as cofactor. Requires Mn(2+) as cofactor.

The protein localises to the cytoplasm. It carries out the reaction 2 D-alanine + ATP = D-alanyl-D-alanine + ADP + phosphate + H(+). It functions in the pathway cell wall biogenesis; peptidoglycan biosynthesis. Functionally, cell wall formation. The polypeptide is D-alanine--D-alanine ligase (Prochlorococcus marinus subsp. pastoris (strain CCMP1986 / NIES-2087 / MED4)).